The following is a 267-amino-acid chain: Mlc titration factor A (267 aa).

Zn(2+)-binding residues include His-111, His-148, His-152, and Glu-211.

The protein belongs to the MtfA family. In terms of assembly, interacts with Mlc. The cofactor is Zn(2+).

Its subcellular location is the cytoplasm. Functionally, involved in the modulation of the activity of the glucose-phosphotransferase system (glucose-PTS). Interacts with the transcriptional repressor Mlc, preventing its interaction with DNA and leading to the modulation of expression of genes regulated by Mlc, including ptsG, which encodes the PTS system glucose-specific EIICB component. In terms of biological role, shows zinc-dependent metallopeptidase activity. The chain is Mlc titration factor A from Yersinia enterocolitica serotype O:8 / biotype 1B (strain NCTC 13174 / 8081).